Reading from the N-terminus, the 285-residue chain is Bifunctional protein FolD (285 aa).

Residues 164–166 (GAS), Ile189, and Ile230 each bind NADP(+).

Belongs to the tetrahydrofolate dehydrogenase/cyclohydrolase family. Homodimer.

It catalyses the reaction (6R)-5,10-methylene-5,6,7,8-tetrahydrofolate + NADP(+) = (6R)-5,10-methenyltetrahydrofolate + NADPH. The enzyme catalyses (6R)-5,10-methenyltetrahydrofolate + H2O = (6R)-10-formyltetrahydrofolate + H(+). It participates in one-carbon metabolism; tetrahydrofolate interconversion. Catalyzes the oxidation of 5,10-methylenetetrahydrofolate to 5,10-methenyltetrahydrofolate and then the hydrolysis of 5,10-methenyltetrahydrofolate to 10-formyltetrahydrofolate. This Sulfurimonas denitrificans (strain ATCC 33889 / DSM 1251) (Thiomicrospira denitrificans (strain ATCC 33889 / DSM 1251)) protein is Bifunctional protein FolD.